Here is a 135-residue protein sequence, read N- to C-terminus: Transcription antitermination protein NusB (135 aa).

Belongs to the NusB family.

Involved in transcription antitermination. Required for transcription of ribosomal RNA (rRNA) genes. Binds specifically to the boxA antiterminator sequence of the ribosomal RNA (rrn) operons. The chain is Transcription antitermination protein NusB from Shewanella pealeana (strain ATCC 700345 / ANG-SQ1).